The primary structure comprises 515 residues: Envelope glycoprotein (515 aa).

The first 33 residues, Met1 to Thr33, serve as a signal peptide directing secretion. The Extracellular segment spans residues Trp34 to Thr435. N-linked (GlcNAc...) asparagine; by host glycans are attached at residues Asn129 and Asn203. Positions Cys212–Cys215 match the CXXC motif. Disulfide bonds link Cys212-Cys215, Cys212-Cys392, and Cys384-Cys391. Residues Asn230, Asn251, Asn256, Asn271, and Asn287 are each glycosylated (N-linked (GlcNAc...) asparagine; by host). Residues Ala304–Val324 are fusion peptide. 2 coiled-coil regions span residues Gln330–Ile376 and Asn388–Trp420. Asn351 is a glycosylation site (N-linked (GlcNAc...) asparagine; by host). The segment at Ala365–Gln381 is immunosuppression. A CX6CC motif is present at residues Cys384–Cys392. Residue Asn398 is glycosylated (N-linked (GlcNAc...) asparagine; by host). A helical transmembrane segment spans residues Ile436 to Leu456. A lipid anchor (S-palmitoyl cysteine; by host) is attached at Cys455. At Ile457–Pro515 the chain is on the cytoplasmic side.

The mature envelope protein (Env) consists of a trimer of SU-TM heterodimers attached by a labile interchain disulfide bond. In terms of processing, specific enzymatic cleavages in vivo yield mature proteins. Envelope glycoproteins are synthesized as an inactive precursor that is N-glycosylated and processed likely by host cell furin or by a furin-like protease in the Golgi to yield the mature SU and TM proteins. The cleavage site between SU and TM requires the minimal sequence [KR]-X-[KR]-R. Post-translationally, the CXXC motif is highly conserved across a broad range of retroviral envelope proteins. It is thought to participate in the formation of a labile disulfide bond possibly with the CX6CC motif present in the transmembrane protein. Isomerization of the intersubunit disulfide bond to an SU intrachain disulfide bond is thought to occur upon receptor recognition in order to allow membrane fusion. The transmembrane protein is palmitoylated.

The protein localises to the virion membrane. It localises to the host cell membrane. Functionally, the surface protein (SU) attaches the virus to the host cell by binding to its receptor. This interaction triggers the refolding of the transmembrane protein (TM) and is thought to activate its fusogenic potential by unmasking its fusion peptide. Fusion occurs at the host cell plasma membrane. The transmembrane protein (TM) acts as a class I viral fusion protein. Under the current model, the protein has at least 3 conformational states: pre-fusion native state, pre-hairpin intermediate state, and post-fusion hairpin state. During viral and target cell membrane fusion, the coiled coil regions (heptad repeats) assume a trimer-of-hairpins structure, positioning the fusion peptide in close proximity to the C-terminal region of the ectodomain. The formation of this structure appears to drive apposition and subsequent fusion of viral and target cell membranes. Membranes fusion leads to delivery of the nucleocapsid into the cytoplasm. This is Envelope glycoprotein (env) from Bovine leukemia virus (isolate Belgium LB285) (BLV).